The following is a 134-amino-acid chain: Profilin-2 (134 aa).

Cysteines 13 and 118 form a disulfide. The Involved in PIP2 interaction motif lies at 84 to 100 (AVIRGKKGSGGITIKKT). Threonine 114 carries the phosphothreonine modification.

This sequence belongs to the profilin family. In terms of processing, phosphorylated by MAP kinases.

Its subcellular location is the cytoplasm. The protein resides in the cytoskeleton. The sequence is that of Profilin-2 from Olea europaea (Common olive).